Consider the following 201-residue polypeptide: U1 small nuclear ribonucleoprotein C (201 aa).

The segment at 4-36 adopts a Matrin-type zinc-finger fold; the sequence is YYCEYCDIYLTHSSPVGRRQHNQGRKHISAKIE. Residues 137–154 are compositionally biased toward low complexity; sequence IQKPYNNFDNKNNNYNNK. The segment at 137-176 is disordered; sequence IQKPYNNFDNKNNNYNNKPITNSSYKNDKQDYRNNNENND.

The protein belongs to the U1 small nuclear ribonucleoprotein C family. In terms of assembly, U1 snRNP is composed of the 7 core Sm proteins B/B', D1, D2, D3, E, F and G that assemble in a heptameric protein ring on the Sm site of the small nuclear RNA to form the core snRNP, and at least 3 U1 snRNP-specific proteins U1-70K, U1-A and U1-C. U1-C interacts with U1 snRNA and the 5' splice-site region of the pre-mRNA.

Its subcellular location is the nucleus. Its function is as follows. Component of the spliceosomal U1 snRNP, which is essential for recognition of the pre-mRNA 5' splice-site and the subsequent assembly of the spliceosome. U1-C is directly involved in initial 5' splice-site recognition for both constitutive and regulated alternative splicing. The interaction with the 5' splice-site seems to precede base-pairing between the pre-mRNA and the U1 snRNA. Stimulates commitment or early (E) complex formation by stabilizing the base pairing of the 5' end of the U1 snRNA and the 5' splice-site region. This Plasmodium yoelii yoelii protein is U1 small nuclear ribonucleoprotein C.